The chain runs to 66 residues: MDISGMQINEVQSKLKEYYNVLKMARKPDWEEFSMTAKVALAVMFIVGFVGFVIYILMEILPGALK.

The chain crosses the membrane as a helical span at residues 41–61 (LAVMFIVGFVGFVIYILMEIL).

It belongs to the SecE/SEC61-gamma family. In terms of assembly, component of the Sec protein translocase complex. Heterotrimer consisting of SecY (alpha), SecG (beta) and SecE (gamma) subunits. The heterotrimers can form oligomers, although 1 heterotrimer is thought to be able to translocate proteins. Interacts with the ribosome. May interact with SecDF, and other proteins may be involved.

The protein resides in the cell membrane. Its function is as follows. Essential subunit of the Sec protein translocation channel SecYEG. Clamps together the 2 halves of SecY. May contact the channel plug during translocation. This chain is Protein translocase subunit SecE, found in Archaeoglobus fulgidus (strain ATCC 49558 / DSM 4304 / JCM 9628 / NBRC 100126 / VC-16).